A 196-amino-acid polypeptide reads, in one-letter code: Glycerol-3-phosphate acyltransferase (196 aa).

5 helical membrane-spanning segments follow: residues 4–24 (FYIM…VVLT), 53–73 (LGVL…LIAI), 78–98 (LGDA…CYPV), 114–134 (IFLV…ALLV), and 140–160 (VSLG…FTEG).

Belongs to the PlsY family. In terms of assembly, probably interacts with PlsX.

It localises to the cell inner membrane. It catalyses the reaction an acyl phosphate + sn-glycerol 3-phosphate = a 1-acyl-sn-glycero-3-phosphate + phosphate. It functions in the pathway lipid metabolism; phospholipid metabolism. Catalyzes the transfer of an acyl group from acyl-phosphate (acyl-PO(4)) to glycerol-3-phosphate (G3P) to form lysophosphatidic acid (LPA). This enzyme utilizes acyl-phosphate as fatty acyl donor, but not acyl-CoA or acyl-ACP. The polypeptide is Glycerol-3-phosphate acyltransferase (Syntrophotalea carbinolica (strain DSM 2380 / NBRC 103641 / GraBd1) (Pelobacter carbinolicus)).